Reading from the N-terminus, the 254-residue chain is Alcohol dehydrogenase (254 aa).

10 to 33 (FVAGLGGIGLDTSREIVKSGPKNL) is an NAD(+) binding site. Ser138 serves as a coordination point for substrate. The Proton acceptor role is filled by Tyr151.

The protein belongs to the short-chain dehydrogenases/reductases (SDR) family. In terms of assembly, homodimer.

The catalysed reaction is a primary alcohol + NAD(+) = an aldehyde + NADH + H(+). It catalyses the reaction a secondary alcohol + NAD(+) = a ketone + NADH + H(+). The protein is Alcohol dehydrogenase (Adh) of Drosophila adiastola (Fruit fly).